A 194-amino-acid chain; its full sequence is Large ribosomal subunit protein eL15 (194 aa).

The disordered stretch occupies residues 164–194 (AGRKARGLRRKGRGAEKVRPSLRANFRKKRR). The span at 166 to 175 (RKARGLRRKG) shows a compositional bias: basic residues.

The protein belongs to the eukaryotic ribosomal protein eL15 family.

This Archaeoglobus fulgidus (strain ATCC 49558 / DSM 4304 / JCM 9628 / NBRC 100126 / VC-16) protein is Large ribosomal subunit protein eL15 (rpl15e).